The following is a 475-amino-acid chain: Flotillin-like protein 4 (475 aa).

Coiled coils occupy residues 235–255 (ENQR…KKAA) and 305–325 (QYET…KEAE).

The protein belongs to the band 7/mec-2 family. Flotillin subfamily. As to expression, expressed in roots and nodules. Primarily expressed in vascular tissues. Upon induction of nodulation, expansion of expression in the root cortex in the region of elongating root hairs, which will eventually become colonized by bacteria. Expressed in the infection zone in nodules.

Its subcellular location is the membrane. It is found in the caveola. The protein localises to the cell membrane. Its function is as follows. May act as a scaffolding protein within caveolar membranes, functionally participating in formation of caveolae or caveolae-like vesicles. Required for normal infection threads initiation and elongation and nodulation. Probably involved in polar growth of the infection thread. The sequence is that of Flotillin-like protein 4 (FLOT4) from Medicago truncatula (Barrel medic).